Consider the following 245-residue polypeptide: 4-hydroxy-tetrahydrodipicolinate reductase (245 aa).

NAD(+)-binding positions include 7 to 12, 75 to 77, and 102 to 105; these read GAKGKV, GTT, and APNF. Residue His-132 is the Proton donor/acceptor of the active site. A (S)-2,3,4,5-tetrahydrodipicolinate-binding site is contributed by His-133. Residue Lys-136 is the Proton donor of the active site. 142–143 contributes to the (S)-2,3,4,5-tetrahydrodipicolinate binding site; that stretch reads GT.

Belongs to the DapB family.

It is found in the cytoplasm. It carries out the reaction (S)-2,3,4,5-tetrahydrodipicolinate + NAD(+) + H2O = (2S,4S)-4-hydroxy-2,3,4,5-tetrahydrodipicolinate + NADH + H(+). The catalysed reaction is (S)-2,3,4,5-tetrahydrodipicolinate + NADP(+) + H2O = (2S,4S)-4-hydroxy-2,3,4,5-tetrahydrodipicolinate + NADPH + H(+). The protein operates within amino-acid biosynthesis; L-lysine biosynthesis via DAP pathway; (S)-tetrahydrodipicolinate from L-aspartate: step 4/4. In terms of biological role, catalyzes the conversion of 4-hydroxy-tetrahydrodipicolinate (HTPA) to tetrahydrodipicolinate. The polypeptide is 4-hydroxy-tetrahydrodipicolinate reductase (Mycobacterium bovis (strain ATCC BAA-935 / AF2122/97)).